We begin with the raw amino-acid sequence, 343 residues long: MKTVSIIGGTGYTGSELLRLLSTHEKVEVLNVTSRKEAGKKLTDFHPQVRNLRNYNDLEFQNIAPEDIDTDIVFCATPHGASMAIVPILHEKGINIIDLSGDYRFEDIEMYESWYGLKHTGKIESAVYGLPELHREKIKKSKTIANPGCYPTGAILSMAPLVANDLVDERIIFDSKSGVSGAGVEASQTTHFPNVNENLGAYKITKHRHSPEIGKELEYLGNKKLKVSFTPHLLPVTRGILTTAHSYLKEDVSRADVIEIYEEFYDGEFFVRIFEEGMVSLTGVRGTNFCDIGGFEIDQHGRIVVVSAIDNLVKGASGQAIQNMNIIMGFDEKMGLSVGGMRP.

Cys149 is a catalytic residue.

Belongs to the NAGSA dehydrogenase family. Type 1 subfamily.

The protein resides in the cytoplasm. The enzyme catalyses N-acetyl-L-glutamate 5-semialdehyde + phosphate + NADP(+) = N-acetyl-L-glutamyl 5-phosphate + NADPH + H(+). The protein operates within amino-acid biosynthesis; L-arginine biosynthesis; N(2)-acetyl-L-ornithine from L-glutamate: step 3/4. Catalyzes the NADPH-dependent reduction of N-acetyl-5-glutamyl phosphate to yield N-acetyl-L-glutamate 5-semialdehyde. The chain is N-acetyl-gamma-glutamyl-phosphate reductase from Methanococcus maripaludis (strain C7 / ATCC BAA-1331).